Here is a 433-residue protein sequence, read N- to C-terminus: GTPase Der (433 aa).

EngA-type G domains are found at residues 5–167 (KKVL…GEVG) and 174–349 (IKVG…DQLE). GTP is bound by residues 11 to 18 (GRPNVGKS), 58 to 62 (DTGGF), 119 to 122 (NKVD), 180 to 187 (GKPNSGKS), 227 to 231 (DTAGI), and 292 to 295 (SKWD). Positions 349–429 (ELKTSTPDLN…PILVELKEKI (81 aa)) constitute a KH-like domain.

Belongs to the TRAFAC class TrmE-Era-EngA-EngB-Septin-like GTPase superfamily. EngA (Der) GTPase family. In terms of assembly, associates with the 50S ribosomal subunit.

GTPase that plays an essential role in the late steps of ribosome biogenesis. This is GTPase Der from Borreliella burgdorferi (strain ATCC 35210 / DSM 4680 / CIP 102532 / B31) (Borrelia burgdorferi).